A 137-amino-acid polypeptide reads, in one-letter code: uncharacterized protein (137 aa).

Positions 1 to 15 (MKKLAIAGALLLLAG) are cleaved as a signal peptide. The N-palmitoyl cysteine moiety is linked to residue cysteine 16. Cysteine 16 is lipidated: S-diacylglycerol cysteine.

Its subcellular location is the cell membrane. This is an uncharacterized protein from Escherichia coli (strain K12).